We begin with the raw amino-acid sequence, 438 residues long: LIM domain-containing protein C4F6.12 (438 aa).

Disordered regions lie at residues 1 to 37 (MHSPIPELPRFERRLTGPRAAPSSPVSTNGSPLNNLV) and 49 to 78 (TGGRIATPLPQPSLKTPESPLSKRNPTIKQ). Over residues 24–37 (SPVSTNGSPLNNLV) the composition is skewed to polar residues. A phosphoserine mark is found at S67 and S96. LIM zinc-binding domains lie at 256–316 (KSCH…QFSP), 318–375 (CKHC…NKYA), and 376–435 (VKCK…SVKF).

This chain is LIM domain-containing protein C4F6.12, found in Schizosaccharomyces pombe (strain 972 / ATCC 24843) (Fission yeast).